The following is a 297-amino-acid chain: Vacuolar protein sorting-associated protein 26C (297 aa).

This sequence belongs to the VPS26 family. In terms of assembly, component of the commander complex that is essential for endosomal recycling of transmembrane cargos; the commander complex is composed of the CCC subcomplex and the retriever subcomplex. Component of the heterotrimeric retriever complex consisting of VPS26C, VPS29 and VPS35L; within the complex interacts with VPS35L. Interacts with SNX17 (via C-terminus); the interaction is direct and associates SNX17 with the retriever complex. Interacts with SNX31; the interaction is direct. In terms of tissue distribution, ubiquitously expressed.

It is found in the endosome. Its function is as follows. Component of the commander complex that is essential for endosomal recycling of transmembrane cargos; the commander complex is composed of the CCC subcomplex and the retriever subcomplex. Component of the retriever complex, which is a heterotrimeric complex related to retromer cargo-selective complex (CSC) and essential for retromer-independent retrieval and recycling of numerous cargos such as integrin alpha-5/beta-1 (ITGA5:ITGB1). The recruitment of the retriever complex to the endosomal membrane involves CCC and WASH complexes. In the endosomes, drives the retriever and recycling of NxxY-motif-containing cargo proteins by coupling to SNX17, a cargo essential for the homeostatic maintenance of numerous cell surface proteins associated with processes that include cell migration, cell adhesion, nutrient supply and cell signaling. In terms of biological role, (Microbial infection) The heterotrimeric retriever complex, in collaboration with the CCC complex, mediates the exit of human papillomavirus to the cell surface. This Homo sapiens (Human) protein is Vacuolar protein sorting-associated protein 26C.